We begin with the raw amino-acid sequence, 364 residues long: DNA replication and repair protein RecF (364 aa).

30-37 (GNNGQGKT) contacts ATP.

It belongs to the RecF family.

The protein localises to the cytoplasm. Its function is as follows. The RecF protein is involved in DNA metabolism; it is required for DNA replication and normal SOS inducibility. RecF binds preferentially to single-stranded, linear DNA. It also seems to bind ATP. The sequence is that of DNA replication and repair protein RecF from Citrifermentans bemidjiense (strain ATCC BAA-1014 / DSM 16622 / JCM 12645 / Bem) (Geobacter bemidjiensis).